The chain runs to 625 residues: DELLA protein SLR1 (625 aa).

The disordered stretch occupies residues 1–34 (MKREYQEAGGSSGGGSSADMGSCKDKVMAGAAGE). The DELLA motif motif lies at 39–43 (DELLA). A disordered region spans residues 167-208 (TADPSAADSARDTKRMRTGGGSTSSSSSSSSSLGGGASRGSV). The span at 189 to 198 (TSSSSSSSSS) shows a compositional bias: low complexity. Residues 232-621 (VDTQEAGIRL…RPLIATSAWR (390 aa)) enclose the GRAS domain. Residues 239–294 (IRLVHALLACAEAVQQENFAAAEALVKQIPTLAASQGGAMRKVAAYFGEALARRVY) are leucine repeat I (LRI). The segment at 241 to 278 (LVHALLACAEAVQQENFAAAEALVKQIPTLAASQGGAM) is required for possible homodimerization. The LxCxE motif motif lies at 246–250 (LACAE). The VHIID stretch occupies residues 313 to 378 (HAHFYESCPY…GGPPSFRLTG (66 aa)). Residues 344 to 348 (VHVVD) carry the VHIID motif. Positions 392-431 (QVGWKLAQFAHTIRVDFQYRGLVAATLADLEPFMLQPEGE) are leucine repeat II (LRII). The PFYRE stretch occupies residues 441-542 (IAVNSVFELH…EVYLGRQICN (102 aa)). The LXXLL motif motif lies at 449 to 453 (LHRLL). Residues 545–621 (ACEGAERTER…RPLIATSAWR (77 aa)) are SAW.

Belongs to the GRAS family. DELLA subfamily.

Its function is as follows. Probable transcriptional regulator that acts as a repressor of the gibberellin (GA) signaling pathway. Probably acts by participating in large multiprotein complexes that repress transcription of GA-inducible genes. Upon GA application, it is degraded by the proteasome, allowing the GA signaling pathway. In contrast, its overexpression prevents the GA signaling pathway and induces a dwarf phenotype. This is DELLA protein SLR1 from Oryza sativa subsp. indica (Rice).